A 199-amino-acid chain; its full sequence is Thymidine kinase (199 aa).

ATP is bound by residues 23-30 and 95-98; these read GSMFSGKT and DEAQ. The active-site Proton acceptor is the Glu-96. Positions 152, 155, 184, and 187 each coordinate Zn(2+).

Belongs to the thymidine kinase family. Homotetramer.

Its subcellular location is the cytoplasm. It catalyses the reaction thymidine + ATP = dTMP + ADP + H(+). In Bacteroides fragilis (strain YCH46), this protein is Thymidine kinase.